The following is a 131-amino-acid chain: Small ribosomal subunit protein uS11 (131 aa).

This sequence belongs to the universal ribosomal protein uS11 family. In terms of assembly, part of the 30S ribosomal subunit. Interacts with proteins S7 and S18. Binds to IF-3.

In terms of biological role, located on the platform of the 30S subunit, it bridges several disparate RNA helices of the 16S rRNA. Forms part of the Shine-Dalgarno cleft in the 70S ribosome. The sequence is that of Small ribosomal subunit protein uS11 from Helicobacter pylori (strain P12).